A 920-amino-acid polypeptide reads, in one-letter code: Chitin synthase C (920 aa).

Disordered stretches follow at residues 1-41 (MSYN…NAYQ) and 140-173 (IPML…SPAP). The span at 154–163 (YSDEYQVEEQ) shows a compositional bias: acidic residues. The next 5 helical transmembrane spans lie at 466–486 (SAFG…FVAL), 564–584 (RWLN…YQIW), 608–628 (LFAW…TTYL), 640–660 (VLGV…FVLA), and 675–695 (MVYF…FVTV). Asparagine 715 is a glycosylation site (N-linked (GlcNAc...) asparagine). The next 4 helical transmembrane spans lie at 718–738 (FFTI…ASII), 749–769 (FIQY…YAFC), 847–867 (AVVL…LSAA), and 892–912 (VVLW…LWYL).

This sequence belongs to the chitin synthase family. Class I subfamily.

It is found in the cell membrane. It carries out the reaction [(1-&gt;4)-N-acetyl-beta-D-glucosaminyl](n) + UDP-N-acetyl-alpha-D-glucosamine = [(1-&gt;4)-N-acetyl-beta-D-glucosaminyl](n+1) + UDP + H(+). Functionally, polymerizes chitin, a structural polymer of the cell wall and septum, by transferring the sugar moiety of UDP-GlcNAc to the non-reducing end of the growing chitin polymer. Involved in hyphal growth. This is Chitin synthase C from Aspergillus oryzae (strain ATCC 42149 / RIB 40) (Yellow koji mold).